Reading from the N-terminus, the 189-residue chain is HGPRTase-like protein (189 aa).

It belongs to the purine/pyrimidine phosphoribosyltransferase family. Archaeal HPRT subfamily.

Its function is as follows. May catalyze a purine salvage reaction, the substrate is unknown. The polypeptide is HGPRTase-like protein (Halorubrum lacusprofundi (strain ATCC 49239 / DSM 5036 / JCM 8891 / ACAM 34)).